The sequence spans 637 residues: Galactofuranosyltransferase GlfT2 (637 aa).

Arginine 171, glutamine 200, asparagine 229, and aspartate 256 together coordinate UDP-alpha-D-galactofuranose. Residues aspartate 256 and aspartate 258 each coordinate Mn(2+). The active-site Proton acceptor is the aspartate 372. Histidine 396 is a binding site for Mn(2+).

This sequence belongs to the glycosyltransferase 2 family. As to quaternary structure, homotetramer. Mn(2+) serves as cofactor. It depends on Mg(2+) as a cofactor.

The protein resides in the cell membrane. It catalyses the reaction beta-D-galactofuranosyl-(1-&gt;5)-beta-D-galactofuranosyl-(1-&gt;4)-alpha-L-rhamnosyl-(1-&gt;3)-N-acetyl-alpha-D-glucosaminyl-diphospho-trans,octa-cis-decaprenol + 28 UDP-alpha-D-galactofuranose = [beta-D-galactofuranosyl-(1-&gt;5)-beta-D-galactofuranosyl-(1-&gt;6)]14-beta-D-galactofuranosyl-(1-&gt;5)-beta-D-galactofuranosyl-(1-&gt;4)-alpha-L-rhamnopyranosyl-(1-&gt;3)-N-acetyl-alpha-D-glucosaminyl-diphospho-trans,octa-cis-decaprenol + 28 UDP + 28 H(+). The protein operates within cell wall biogenesis; cell wall polysaccharide biosynthesis. Functionally, involved in the galactan polymerization of the arabinogalactan (AG) region of the mycolylarabinogalactan-peptidoglycan (mAGP) complex, an essential component of the mycobacteria cell wall. Thus, successively transfers approximately 28 galactofuranosyl (Galf) residues from UDP-galactofuranose (UDP-Galf) onto the galactofuranosyl-galactofuranosyl-rhamnosyl-GlcNAc-diphospho-decaprenol (Galf-Galf-Rha-GlcNAc-PP-C50) acceptor produced by GlfT1, with alternating 1-&gt;5 and 1-&gt;6 links, forming a galactan domain with approximately 30 galactofuranosyl residues. In Mycobacterium tuberculosis (strain ATCC 25618 / H37Rv), this protein is Galactofuranosyltransferase GlfT2.